The following is a 262-amino-acid chain: Intron-encoded DNA endonuclease ai2b (262 aa).

Belongs to the LAGLIDADG endonuclease family.

It is found in the mitochondrion. Mitochondrial DNA endonuclease involved in intron homing. This is Intron-encoded DNA endonuclease ai2b (ai2b) from Dictyostelium discoideum (Social amoeba).